A 359-amino-acid polypeptide reads, in one-letter code: DNA replication and repair protein RecF (359 aa).

Residue G30 to T37 participates in ATP binding.

The protein belongs to the RecF family.

The protein resides in the cytoplasm. Functionally, the RecF protein is involved in DNA metabolism; it is required for DNA replication and normal SOS inducibility. RecF binds preferentially to single-stranded, linear DNA. It also seems to bind ATP. In Psychromonas ingrahamii (strain DSM 17664 / CCUG 51855 / 37), this protein is DNA replication and repair protein RecF.